Consider the following 219-residue polypeptide: MGQKVNPIGLRVGVIRDWESRWFAEKDYATLLHEDIKIREYINVRLKDSAVAKVEIERAANRVNVTIHTAKPGMVIGKGGTEVEALRKALNQLTGKRVHINILEVKRADLNAKLVGENIARQLENRVSFRRAQKQVIQRAMRAGAKGIKTQVSGRLGGADIARAESYSEGTVPLHTLRADIDYAAVEADTTYGKLGVKVWIYRGEVLPTKKKASEEGGK.

The KH type-2 domain occupies 38–106 (IREYINVRLK…RVHINILEVK (69 aa)).

The protein belongs to the universal ribosomal protein uS3 family. In terms of assembly, part of the 30S ribosomal subunit. Forms a tight complex with proteins S10 and S14.

Its function is as follows. Binds the lower part of the 30S subunit head. Binds mRNA in the 70S ribosome, positioning it for translation. This is Small ribosomal subunit protein uS3 from Bacillus thuringiensis (strain Al Hakam).